Consider the following 358-residue polypeptide: Trans-enoyl reductase milB (358 aa).

Residues 48–51, 170–173, 193–196, Y211, 258–259, and 349–350 contribute to the NADP(+) site; these read VDTK, ATAT, SAKH, LD, and VR.

Belongs to the zinc-containing alcohol dehydrogenase family. As to quaternary structure, monomer.

The enzyme catalyses 10 malonyl-CoA + acetyl-CoA + 3 AH2 + 8 NADPH + 18 H(+) = cordypyrone A + 3 A + 10 CO2 + 8 NADP(+) + 11 CoA + 8 H2O. The protein operates within secondary metabolite biosynthesis. Its function is as follows. Trans-enoyl reductase; part of the gene cluster that mediates the biosynthesis of cordypyrones A and B, 2 pyrones that show modest activities against pathogenic bacteria including methicillin-resistant Staphylococcus aureus (MRSA), Mycobacterium tuberculosis and Bacillus cereus. The HR-PKS milA catalyzes the formation of cordypyrones A via condensation of one acetate with 10 malonate units. Since milA lacks an enoyl reductase domain, the 2 beta-keto processing domains DH and KR of milA collaborate with the trans-enoyl reductase milB to catalyze the different levels of reduction. The cytochrome P450 monooxygenase milC then hydroxylates the C-22 of cordypyrones A to yield cordypyrones B. The sequence is that of Trans-enoyl reductase milB from Cordyceps militaris (strain CM01) (Caterpillar fungus).